Consider the following 122-residue polypeptide: Prefoldin subunit 1 (122 aa).

The residue at position 2 (A2) is an N-acetylalanine.

It belongs to the prefoldin subunit beta family. Heterohexamer of two PFD-alpha type and four PFD-beta type subunits.

Its function is as follows. Binds specifically to cytosolic chaperonin (c-CPN) and transfers target proteins to it. Binds to nascent polypeptide chain and promotes folding in an environment in which there are many competing pathways for nonnative proteins. In Mus musculus (Mouse), this protein is Prefoldin subunit 1 (Pfdn1).